Consider the following 61-residue polypeptide: Small ribosomal subunit protein uS14 (61 aa).

Positions 24, 27, 40, and 43 each coordinate Zn(2+).

This sequence belongs to the universal ribosomal protein uS14 family. Zinc-binding uS14 subfamily. As to quaternary structure, part of the 30S ribosomal subunit. Contacts proteins S3 and S10. The cofactor is Zn(2+).

In terms of biological role, binds 16S rRNA, required for the assembly of 30S particles and may also be responsible for determining the conformation of the 16S rRNA at the A site. The sequence is that of Small ribosomal subunit protein uS14 from Chloroflexus aurantiacus (strain ATCC 29364 / DSM 637 / Y-400-fl).